A 444-amino-acid chain; its full sequence is Glucoside xylosyltransferase 2 (444 aa).

At 1–4 the chain is on the cytoplasmic side; the sequence is MKLR. Residues 5–25 form a helical; Signal-anchor for type II membrane protein membrane-spanning segment; that stretch reads SKAAALLLLALAVLLLALLSL. Residues 26 to 444 are Lumenal-facing; the sequence is RARRDPEPPG…IIHMGPNPMS (419 aa). The disordered stretch occupies residues 31-101; the sequence is PEPPGFPARP…LARRPGETRS (71 aa). The segment covering 68 to 83 has biased composition (basic residues); that stretch reads RSPRRQPPRLRPRAGR. A compositionally biased stretch (basic and acidic residues) spans 87–101; it reads ASREKLARRPGETRS. N275 carries N-linked (GlcNAc...) asparagine glycosylation.

This sequence belongs to the glycosyltransferase 8 family.

The protein resides in the membrane. It carries out the reaction 3-O-(beta-D-glucosyl)-L-seryl-[EGF-like domain protein] + UDP-alpha-D-xylose = 3-O-[alpha-D-xylosyl-(1-&gt;3)-beta-D-glucosyl]-L-seryl-[EGF-like domain protein] + UDP + H(+). Functionally, glycosyltransferase which elongates the O-linked glucose attached to EGF-like repeats in the extracellular domain of Notch proteins by catalyzing the addition of xylose. This chain is Glucoside xylosyltransferase 2 (Gxylt2), found in Mus musculus (Mouse).